Reading from the N-terminus, the 165-residue chain is Small ribosomal subunit protein bS16 (165 aa).

The protein belongs to the bacterial ribosomal protein bS16 family.

The protein is Small ribosomal subunit protein bS16 of Azobacteroides pseudotrichonymphae genomovar. CFP2.